The sequence spans 197 residues: Transcription factor FapR (197 aa).

This sequence belongs to the FapR family.

Its function is as follows. Transcriptional factor involved in regulation of membrane lipid biosynthesis by repressing genes involved in fatty acid and phospholipid metabolism. This Bacillus cereus (strain 03BB102) protein is Transcription factor FapR.